A 398-amino-acid polypeptide reads, in one-letter code: MNLELLDPFSIPDYPEALTTTLKHGHATSIRFSTNGYHLASGLVNGSVVIWDLSTFSVSRVLTGHTRAIQSVCWSSCDRFLLTASRDWKCILWDLRDGSIVYQVVLSAPVWSASLHPHKINTFVASLLDESPQLIIVDDGIPKHKYLPTNPDIDENYSDRRNRSKHVTLVSFFHPSGEYILSGTSKGWFHVIDASTTKIRSSHRITSQSIKQIRLSFCKRFLIFNSTDRVIRTVSIQDLDNPEVEHKFQDVVNRLQWNSCGFSQTGEFVFATTYQMAHAIYVWERGMGSLVKILEGPKEELVDVDWHPVFPCVASVGLDSGSIYIWAVEQKESWSAFAPDFQELEENIEYEEPEDEFDIHDETGKSEEEEYFTSVVKILPHDSSAEQPFVMPPTLSSS.

WD repeat units follow at residues L22 to V61, G64 to Q103, N162 to S202, K247 to E295, and G296 to A336.

Component of the Set1 complex composed of ash2, sdc1, set1, shg1, spp1, swd1, swd2 and swd3.

It is found in the nucleus. The Set1 complex specifically methylates 'Lys-4' of histone H3. In Schizosaccharomyces pombe (strain 972 / ATCC 24843) (Fission yeast), this protein is Set1 complex component swd1 (swd1).